The chain runs to 292 residues: Aquaporin PIP1-3/PIP1-4 (292 aa).

The interval 1–42 (MEGKEEDVRLGANKFSERQPIGTAAQGAGAGDDDKDYKEPPP) is disordered. 2 consecutive transmembrane segments (helical) span residues 61–81 (IAEFVATFLFLYITVLTVMGV) and 96–118 (IAWSFGGMIFALVYCTAGISGGH). The NPA 1 motif lies at 120–122 (NPA). 3 helical membrane-spanning segments follow: residues 139–159 (IFYIIMQCLGAICGAGVVKGF), 181–201 (GDGLGAEIVGTFILVYTVFSA), and 215–235 (ILAPLPIGFAVFLVHLATIPI). The NPA 2 motif lies at 241-243 (NPA). Residues 263–283 (IFWVGPFIGAALAAIYHQVII) form a helical membrane-spanning segment.

This sequence belongs to the MIP/aquaporin (TC 1.A.8) family. PIP (TC 1.A.8.11) subfamily.

It is found in the cell membrane. Functionally, aquaporins facilitate the transport of water and small neutral solutes across cell membranes. This Zea mays (Maize) protein is Aquaporin PIP1-3/PIP1-4 (PIP1-3).